A 209-amino-acid polypeptide reads, in one-letter code: SAGA-associated factor 11 homolog 1 (209 aa).

Residues 1–36 (MSRTIVVKNPRTSGKDEDKAQIPSQDELPSGSSGAK) form a disordered region. The SGF11-type zinc-finger motif lies at 120 to 141 (CCCPNCERMVAAVRFAPHLQTC). A compositionally biased stretch (low complexity) spans 156 to 166 (LTVSSRSSSTS). The interval 156–209 (LTVSSRSSSTSTGGGQANEKSTDDEDWSLDSRPGKSTKNSRNKGSKKNQKNKLK) is disordered. Residues 193-209 (KNSRNKGSKKNQKNKLK) show a composition bias toward basic residues.

Belongs to the SGF11 family. As to quaternary structure, component of some SAGA transcription coactivator-HAT complexes, at least composed of Ada2b, not/nonstop, Pcaf/Gcn5, Sgf11 and Spt3. Within the SAGA complex, Sgf11, e(y)2, and not/nonstop form an additional subcomplex of SAGA called the DUB module (deubiquitination module). Interacts directly with not/nonstop. Interacts with the AMEX complex component xmas-2. Interacts with Cbp80; important for promoter recruitment of Sgf11 that is not associated with the DUB module.

It is found in the nucleus. The protein localises to the nucleoplasm. The protein resides in the cytoplasm. Its function is as follows. Component of the transcription regulatory histone acetylation (HAT) complex SAGA, a multiprotein complex that activates transcription by remodeling chromatin and mediating histone acetylation and deubiquitination. Within the SAGA complex, participates in a subcomplex that specifically deubiquitinates histone H2B. The SAGA complex is recruited to specific gene promoters by activators, where it is required for transcription. Required for nuclear receptor-mediated transactivation. Binds independently on SAGA to promoters in an RNA-dependent manner. Binds to mRNA and is essential for total mRNA export from the nucleus. Required to counteract heterochromatin silencing. Controls the development of neuronal connectivity in visual system by being required for accurate axon targeting in the optic lobe. Required for expression of ecdysone-induced genes such as br/broad. This Drosophila willistoni (Fruit fly) protein is SAGA-associated factor 11 homolog 1.